The sequence spans 312 residues: Malate dehydrogenase (312 aa).

Residues 7 to 13 (GAAGGIG) and aspartate 34 contribute to the NAD(+) site. Residues arginine 81 and arginine 87 each contribute to the substrate site. NAD(+)-binding positions include asparagine 94 and 117-119 (ITN). Residues asparagine 119 and arginine 153 each coordinate substrate. Catalysis depends on histidine 177, which acts as the Proton acceptor. Methionine 227 contacts NAD(+).

It belongs to the LDH/MDH superfamily. MDH type 1 family. In terms of assembly, homodimer.

The catalysed reaction is (S)-malate + NAD(+) = oxaloacetate + NADH + H(+). Catalyzes the reversible oxidation of malate to oxaloacetate. This chain is Malate dehydrogenase, found in Edwardsiella ictaluri (strain 93-146).